The following is a 208-amino-acid chain: 3,4-dihydroxy-2-butanone 4-phosphate synthase (208 aa).

T3 carries the post-translational modification Phosphothreonine. Residue E27 coordinates Mg(2+). Residue D31 participates in D-ribulose 5-phosphate binding. C56 carries the post-translational modification S-glutathionyl cysteine; by GRX2. D-ribulose 5-phosphate contacts are provided by residues T88 and 145 to 149; that span reads RRGHT. H148 contributes to the Mg(2+) binding site.

Belongs to the DHBP synthase family. Homodimer. Requires Mg(2+) as cofactor. It depends on Mn(2+) as a cofactor. Post-translationally, S-glutathionylation of Cys-56 is reversible and dependent on the cytoplasmic isoform of glutaredoxin-2.

Its subcellular location is the cytoplasm. It localises to the nucleus. It is found in the mitochondrion intermembrane space. It carries out the reaction D-ribulose 5-phosphate = (2S)-2-hydroxy-3-oxobutyl phosphate + formate + H(+). It functions in the pathway cofactor biosynthesis; riboflavin biosynthesis; 2-hydroxy-3-oxobutyl phosphate from D-ribulose 5-phosphate: step 1/1. Functionally, catalyzes the conversion of D-ribulose 5-phosphate to formate and 3,4-dihydroxy-2-butanone 4-phosphate. Also has an unrelated function in expression of mitochondrial respiration. This is 3,4-dihydroxy-2-butanone 4-phosphate synthase (RIB3) from Saccharomyces cerevisiae (strain ATCC 204508 / S288c) (Baker's yeast).